A 220-amino-acid chain; its full sequence is Large ribosomal subunit protein eL15 (220 aa).

This sequence belongs to the eukaryotic ribosomal protein eL15 family.

The polypeptide is Large ribosomal subunit protein eL15 (Staphylothermus marinus (strain ATCC 43588 / DSM 3639 / JCM 9404 / F1)).